The primary structure comprises 197 residues: Rac-like GTP-binding protein ARAC6 (197 aa).

13–20 (GDGAVGKT) is a binding site for GTP. Residues 35-43 (YVPTVFDNF) carry the Effector region motif. GTP-binding positions include 60–64 (DTAGQ) and 118–121 (TKLD). Serine 160 lines the GDP pocket. Cysteine methyl ester is present on cysteine 194. Residue cysteine 194 is the site of S-geranylgeranyl cysteine attachment. Positions 195–197 (SIL) are cleaved as a propeptide — removed in mature form.

Belongs to the small GTPase superfamily. Rho family. As to quaternary structure, interacts with SPK1. Ubiquitous. Preferentially expressed in mature pollen and pollen tubes.

Its subcellular location is the cytoplasm. The protein resides in the membrane. Its function is as follows. May be involved in cell polarity control during the actin-dependent tip growth of pollen tubes. Inactive GDP-bound Rho GTPases reside in the cytosol, are found in a complex with Rho GDP-dissociation inhibitors (Rho GDIs), and are released from the GDI protein in order to translocate to membranes upon activation. In Arabidopsis thaliana (Mouse-ear cress), this protein is Rac-like GTP-binding protein ARAC6 (ARAC6).